A 467-amino-acid polypeptide reads, in one-letter code: Mothers against decapentaplegic homolog 2 (467 aa).

Position 2 is an N-acetylserine (serine 2). Threonine 8 bears the Phosphothreonine mark. An MH1 domain is found at 10 to 176; sequence PVVKRLLGWK…YQRVETPVLP (167 aa). Residue lysine 19 is modified to N6-acetyllysine. Residues cysteine 74, cysteine 149, cysteine 161, and histidine 166 each coordinate Zn(2+). Residues 207–217 are compositionally biased toward polar residues; it reads PAGIEPQSNYI. The disordered stretch occupies residues 207 to 251; sequence PAGIEPQSNYIPETPPPGYISEDGETSDQQLNQSMDTGSPAELSP. Threonine 220 carries the post-translational modification Phosphothreonine. A PY-motif motif is present at residues 221–225; sequence PPPGY. The segment covering 233–243 has biased composition (polar residues); sequence SDQQLNQSMDT. At serine 240 the chain carries Phosphoserine; by CAMK2. Residues serine 245, serine 250, serine 255, serine 458, serine 460, and serine 464 each carry the phosphoserine modification. In terms of domain architecture, MH2 spans 274 to 467; sequence WCSIAYYELN…SPSVRCSSMS (194 aa). 2 positions are modified to phosphoserine; by TGFBR1: serine 465 and serine 467.

The protein belongs to the dwarfin/SMAD family. Monomer; in the absence of TGF-beta. Heterodimer; in the presence of TGF-beta. Forms a heterodimer with co-SMAD, SMAD4, in the nucleus to form the transactivation complex SMAD2/SMAD4. Found in a complex with SMAD3 and TRIM33 upon addition of TGF-beta. Identified in a complex that contains at least ZNF451, SMAD2, SMAD3 and SMAD4. Interacts (via the MH2 domain) with ZFYVE9; may form trimers with the SMAD4 co-SMAD. Interacts with TAZ/WWRT1. Interacts with FOXH1. Interacts with SNW1. Interacts with CREB-binding protein (CBP) and EP300. Interacts with SNON. Interacts with ALK4/ACVR1B. Interacts with SKOR1. Interacts with SKOR2. Interacts with PRDM16. Interacts (via MH2 domain) with LEMD3. Interacts with RBPMS. Interacts with WWP1. Interacts (dephosphorylated form, via the MH1 and MH2 domains) with RANBP3 (via its C-terminal R domain); the interaction results in the export of dephosphorylated SMAD3 out of the nucleus and termination of the TGF-beta signaling. Interacts with PDPK1 (via PH domain). Interacts with DAB2; the interactions are enhanced upon TGF-beta stimulation. Interacts with USP15. Interacts with PPP5C. Interacts with LDLRAD4 (via the SMAD interaction motif). Interacts (via MH2 domain) with PMEPA1 (via the SMAD interaction motif). Interacts with ZFHX3. Interacts with ZNF451. Interacts with SMURF2 when phosphorylated on Ser-465/467. Interacts with PPM1A. Interacts with TGF-beta. Interacts with TGFBR1. Interacts with TGIF. Interacts with SMAD3 and TRIM33. Interacts with ZNF580. Interacts with NEDD4L in response to TGF-beta. Interacts with HGS. Interacts with AIP1. Interacts with WWP1. Interacts with PML. Interacts weakly with ZNF8. Interacts (when phosphorylated) with RNF111; RNF111 acts as an enhancer of the transcriptional responses by mediating ubiquitination and degradation of SMAD2 inhibitors. Interacts with YAP1 (when phosphorylated at 'Ser-55'). Interacts when phosphorylated with IPO7; the interaction facilitates translocation of SMAD2 to the nucleus. Interacts with MTMR4; negatively regulates TGF-beta signaling through SMAD2 dephosphorylation and retention in endosomes. In response to TGF-beta, phosphorylated on the C-terminal SXS motif by TGF-beta and activin type 1 receptor kinases, phosphorylation declines progressively in a KMT5A-dependent manner. Phosphorylation in this motif is required for interaction with a number of proteins including SMURF2, SNON and SMAD4 in response to TGF-beta. Dephosphorylated in this motif by PPM1A leading to disruption of the SMAD2/3-SMAD4 complex, nuclear export and termination of the TGF-beta signaling. In response to decorin, the naturally occurring inhibitor of TGF-beta signaling, phosphorylated on Ser-240 by CaMK2. Phosphorylated by MAPK3 upon EGF stimulation; which increases transcriptional activity and stability, and is blocked by calmodulin. Phosphorylated by PDPK1. In terms of processing, acetylated on Lys-19 by coactivators in response to TGF-beta signaling, which increases transcriptional activity. Post-translationally, in response to TGF-beta, ubiquitinated by NEDD4L; which promotes its degradation. Monoubiquitinated, leading to prevent DNA-binding. Deubiquitination by USP15 alleviates inhibition and promotes activation of TGF-beta target genes. Ubiquitinated by RNF111, leading to its degradation: only SMAD2 proteins that are 'in use' are targeted by RNF111, RNF111 playing a key role in activating SMAD2 and regulating its turnover.

It localises to the cytoplasm. The protein localises to the nucleus. Functionally, receptor-regulated SMAD (R-SMAD) that is an intracellular signal transducer and transcriptional modulator activated by TGF-beta (transforming growth factor) and activin type 1 receptor kinases. Binds the TRE element in the promoter region of many genes that are regulated by TGF-beta and, on formation of the SMAD2/SMAD4 complex, activates transcription. Promotes TGFB1-mediated transcription of odontoblastic differentiation genes in dental papilla cells. Positively regulates PDPK1 kinase activity by stimulating its dissociation from the 14-3-3 protein YWHAQ which acts as a negative regulator. The polypeptide is Mothers against decapentaplegic homolog 2 (SMAD2) (Bos taurus (Bovine)).